Here is a 233-residue protein sequence, read N- to C-terminus: UPF0173 metal-dependent hydrolase Igni_1254 (233 aa).

Belongs to the UPF0173 family.

The protein is UPF0173 metal-dependent hydrolase Igni_1254 of Ignicoccus hospitalis (strain KIN4/I / DSM 18386 / JCM 14125).